The primary structure comprises 274 residues: 3-methyl-2-oxobutanoate hydroxymethyltransferase (274 aa).

Mg(2+)-binding residues include aspartate 46 and aspartate 85. 3-methyl-2-oxobutanoate is bound by residues 46–47 (DS), aspartate 85, and lysine 114. Glutamate 116 provides a ligand contact to Mg(2+). Residue glutamate 183 is the Proton acceptor of the active site.

This sequence belongs to the PanB family. As to quaternary structure, homodecamer; pentamer of dimers. It depends on Mg(2+) as a cofactor.

The protein resides in the cytoplasm. The catalysed reaction is 3-methyl-2-oxobutanoate + (6R)-5,10-methylene-5,6,7,8-tetrahydrofolate + H2O = 2-dehydropantoate + (6S)-5,6,7,8-tetrahydrofolate. It functions in the pathway cofactor biosynthesis; coenzyme A biosynthesis. In terms of biological role, catalyzes the reversible reaction in which hydroxymethyl group from 5,10-methylenetetrahydrofolate is transferred onto alpha-ketoisovalerate to form ketopantoate. In Aeropyrum pernix (strain ATCC 700893 / DSM 11879 / JCM 9820 / NBRC 100138 / K1), this protein is 3-methyl-2-oxobutanoate hydroxymethyltransferase.